The sequence spans 241 residues: Lysoplasmalogenase TMEM86A (241 aa).

Over 1–13 (MVSPVTVVKSEGP) the chain is Cytoplasmic. A helical membrane pass occupies residues 14 to 30 (KLVPFFKATCVYFVLWL). Residues 31–36 (PSSSPS) lie on the Extracellular side of the membrane. The chain crosses the membrane as a helical span at residues 37–59 (WVSALIKCLPIFCLWLFLLAHGV). At 60-67 (RFLLAHPS) the chain is on the cytoplasmic side. A helical membrane pass occupies residues 68 to 87 (ASLIFVGLVFSAVGDAFLIW). Topologically, residues 88–96 (QDHGYFEHG) are extracellular. The chain crosses the membrane as a helical span at residues 97–113 (LLMFAVAHILYAAAFGM). Over 114 to 119 (RPLALR) the chain is Cytoplasmic. The helical transmembrane segment at 120-136 (TGLVIGVLSGLCYALLY) threads the bilayer. Topologically, residues 137–142 (PGLSGA) are extracellular. A helical membrane pass occupies residues 143 to 159 (FTYLVGVYVALISFMGW). At 160–176 (RAMAGLRLVGAAWRWTE) the chain is on the cytoplasmic side. A helical transmembrane segment spans residues 177 to 195 (LAAGGGALLFILSDLTIAL). The Extracellular portion of the chain corresponds to 196-206 (NKFCFPVPYSR). Residues 207–225 (ALIMSTYYAAQMLIALSAV) traverse the membrane as a helical segment. Residues 226–241 (ESREPVGEDYRLSKAD) lie on the Cytoplasmic side of the membrane.

It belongs to the TMEM86 family. In terms of tissue distribution, highly expressed in the jejunum, white adipose tissue, kidney and macrophages.

The protein localises to the endoplasmic reticulum membrane. It catalyses the reaction a 1-O-(1Z-alkenyl)-sn-glycero-3-phosphocholine + H2O = a 2,3-saturated aldehyde + sn-glycerol 3-phosphocholine. The catalysed reaction is a 1-O-(1Z-alkenyl)-sn-glycero-3-phosphoethanolamine + H2O = a 2,3-saturated aldehyde + sn-glycero-3-phosphoethanolamine. Its function is as follows. Catalyzes the hydrolysis of the vinyl ether bond of choline or ethanolamine lysoplasmalogens, forming fatty aldehyde and glycerophosphocholine or glycerophosphoethanolamine, respectively and is specific for the sn-2-deacylated (lyso) form of plasmalogen. Plays an important role in lysoplasmalogen metabolism in the adipocyte tissue and macrophages. In Mus musculus (Mouse), this protein is Lysoplasmalogenase TMEM86A (Tmem86a).